Reading from the N-terminus, the 196-residue chain is Large ribosomal subunit protein eL15 (196 aa).

Disordered stretches follow at residues 72-93 (SARKRRHKAGRRSKRQGVTRIT) and 163-196 (GLTGAGRRNRGLSGKGKGSEKTRPSLRSNGGKGK).

This sequence belongs to the eukaryotic ribosomal protein eL15 family. Part of the 50S ribosomal subunit. Interacts with protein L7Ae and weakly with L44e.

This chain is Large ribosomal subunit protein eL15 (rpl15e), found in Haloarcula marismortui (strain ATCC 43049 / DSM 3752 / JCM 8966 / VKM B-1809) (Halobacterium marismortui).